Reading from the N-terminus, the 83-residue chain is Small ribosomal subunit protein uS17 (83 aa).

It belongs to the universal ribosomal protein uS17 family. In terms of assembly, part of the 30S ribosomal subunit.

Its function is as follows. One of the primary rRNA binding proteins, it binds specifically to the 5'-end of 16S ribosomal RNA. This Zymomonas mobilis subsp. mobilis (strain ATCC 31821 / ZM4 / CP4) protein is Small ribosomal subunit protein uS17.